The sequence spans 443 residues: Zinc finger CCCH domain-containing protein 63 (443 aa).

Disordered regions lie at residues 1–29 (MDFDLNGGNKRVFNRLGGGGGSTRPMAPT) and 56–99 (LPGP…SSSW). 2 consecutive C3H1-type zinc fingers follow at residues 30 to 56 (DTRQKVCFHWRAGRCNRSPCPYLHREL) and 109 to 136 (TKTEKVCNFWVDGNCTYGDKCRYLHCWS). WD repeat units follow at residues 149–190 (GHEK…GVLK), 228–265 (GPVGQVYSLVVGTDLLFAGTQDGSILAWRYNAATNCFE), 272–311 (GHTLAVVTLYVGANRLYSGSMDKTIKVWSLDNLQCIQTLT), 313–349 (HSSVVMSLICWDQFLLSCSLDNTVKIWAAIEGGNLEV), 354–396 (KEEH…LFIR), and 404–442 (FAKQEIRAIQIGPGGIFFTGDGTGQVKVWKWCTEPTAAL).

The chain is Zinc finger CCCH domain-containing protein 63 (ZFWD2) from Arabidopsis thaliana (Mouse-ear cress).